The following is a 510-amino-acid chain: NAD(P)H-quinone oxidoreductase subunit 2 A, chloroplastic (510 aa).

The next 13 helical transmembrane spans lie at 24–44 (LLLF…GLIL), 57–77 (IPWL…ALLF), 99–119 (IFQF…VEYI), 124–144 (MAIT…MFLC), 149–169 (LITI…LSGY), 183–203 (YLLM…WLYG), 227–247 (PGIS…LSLA), 295–315 (WHLL…LIAI), 323–343 (MLAY…IVGD), 354–374 (YMLF…SFGL), 395–415 (ALSL…AGFF), 418–438 (LHLF…IGLL), and 484–504 (MIVC…IIAI).

This sequence belongs to the complex I subunit 2 family. In terms of assembly, NDH is composed of at least 16 different subunits, 5 of which are encoded in the nucleus.

The protein resides in the plastid. It is found in the chloroplast thylakoid membrane. It catalyses the reaction a plastoquinone + NADH + (n+1) H(+)(in) = a plastoquinol + NAD(+) + n H(+)(out). It carries out the reaction a plastoquinone + NADPH + (n+1) H(+)(in) = a plastoquinol + NADP(+) + n H(+)(out). NDH shuttles electrons from NAD(P)H:plastoquinone, via FMN and iron-sulfur (Fe-S) centers, to quinones in the photosynthetic chain and possibly in a chloroplast respiratory chain. The immediate electron acceptor for the enzyme in this species is believed to be plastoquinone. Couples the redox reaction to proton translocation, and thus conserves the redox energy in a proton gradient. The chain is NAD(P)H-quinone oxidoreductase subunit 2 A, chloroplastic from Ranunculus macranthus (Large buttercup).